The primary structure comprises 231 residues: Flagellar L-ring protein 2 (231 aa).

An N-terminal signal peptide occupies residues 1–15; that stretch reads MKNLILILPLLMLTG. Cysteine 16 is lipidated: N-palmitoyl cysteine. The S-diacylglycerol cysteine moiety is linked to residue cysteine 16. The tract at residues 30 to 54 is disordered; it reads SPVGSGLRTQADPIPVTPRMRTPVS.

It belongs to the FlgH family. As to quaternary structure, the basal body constitutes a major portion of the flagellar organelle and consists of four rings (L,P,S, and M) mounted on a central rod.

The protein localises to the cell outer membrane. It is found in the bacterial flagellum basal body. Its function is as follows. Assembles around the rod to form the L-ring and probably protects the motor/basal body from shearing forces during rotation. The chain is Flagellar L-ring protein 2 from Bradyrhizobium diazoefficiens (strain JCM 10833 / BCRC 13528 / IAM 13628 / NBRC 14792 / USDA 110).